Consider the following 459-residue polypeptide: Glutamate--isopropylamine ligase (459 aa).

The GS beta-grasp domain maps to 19 to 115 (HNIDTIRLGA…VLCDIQHLNG (97 aa)). Residues 122–459 (PRNLLRKAIE…WELARYLDII (338 aa)) enclose the GS catalytic domain.

The protein belongs to the glutamine synthetase family.

The catalysed reaction is isopropylamine + L-glutamate + ATP = gamma-L-glutamyl-isopropylamide + ADP + phosphate + H(+). Functionally, involved in the degradation of isopropylamine, which is a constituent of the herbicides atrazine. Catalyzes the ATP-dependent formation of gamma-glutamyl-isopropylamide from isopropylamine and L-glutamate. It can also use aminoalkanes, amino-alcohols (L-alaninol and D-alaninol) and amino-esters as substrates. The protein is Glutamate--isopropylamine ligase (ipuC) of Pseudomonas sp.